We begin with the raw amino-acid sequence, 208 residues long: CD209 antigen-like protein E (208 aa).

Residues 1 to 16 (MRAPQMGSLGFLDKGH) are Cytoplasmic-facing. The helical; Signal-anchor for type II membrane protein transmembrane segment at 17 to 37 (IPLVLQLLFLILFTGLLVAII) threads the bilayer. Residues 38–208 (IQVSKMPSSE…KIATTCLSKW (171 aa)) lie on the Extracellular side of the membrane. Intrachain disulfides connect Cys-77/Cys-88, Cys-105/Cys-197, and Cys-176/Cys-189. Positions 83–198 (FFNGNCYFFS…CEQRKFWICK (116 aa)) constitute a C-type lectin domain.

The protein localises to the membrane. Functionally, putative pathogen-recognition receptor. May mediate the endocytosis of pathogens which are subsequently degraded in lysosomal compartments. The chain is CD209 antigen-like protein E (Cd209e) from Mus musculus (Mouse).